The chain runs to 543 residues: MIGIKILVNCALPYANGPLHVGHIAGAYLGADVFVRFNRLIGNEVLYVSGSDEYGTPITVRAEKEGKSPQEIADRYYAEHIETFKKLGINFDIFMRTTYPEHSSVAQEFFLKLLNEGVIEKGTMIAPYCRKIGRFMPDRYIEGECPYCGYKKARGDQCDNCGRTLDPQELINPVCILSGETPEFRETEHFFLRLDLFEERLEEWLKTKTFWKPNVLAYTRNFIQGGLKKRAITRDIDWGVKVPLEGYEHKRIYVWFEALIGYITGAKMFSEVIGKPNYWKEFYFDKDVKNYYFIGKDNIPFHSIIWPAMLLGYGELNLPYDIPANEYLTFKGEQFSKSRGIGYTVDELLRVIPPDYLRYYVASILPETGDSDFSLEELVKTVNSDLIDKYGNFVHRTLSFINKYDLKITKPNSLNDEAFEYAQNAFKEYCDELSQVHIKRSLAIWLNLAIYANSYFNKSEPWNLIKTDRDQCNYKLYVSLKLAQYLTAMIYPFTPTSAKAIWEQLGVNMDIDSSFSILNSINDFSVKPSRIPFEKLDIDKLKL.

The 'HIGH' region motif lies at 13–23; sequence PYANGPLHVGH. Residues Cys-145, Cys-148, Cys-158, and Cys-161 each coordinate Zn(2+). The 'KMSKS' region signature appears at 334 to 338; the sequence is QFSKS. ATP is bound at residue Lys-337.

It belongs to the class-I aminoacyl-tRNA synthetase family. MetG type 1 subfamily. It depends on Zn(2+) as a cofactor.

The protein localises to the cytoplasm. The catalysed reaction is tRNA(Met) + L-methionine + ATP = L-methionyl-tRNA(Met) + AMP + diphosphate. In terms of biological role, is required not only for elongation of protein synthesis but also for the initiation of all mRNA translation through initiator tRNA(fMet) aminoacylation. The protein is Methionine--tRNA ligase of Thermoplasma volcanium (strain ATCC 51530 / DSM 4299 / JCM 9571 / NBRC 15438 / GSS1).